The chain runs to 360 residues: Leukotriene B4 receptor 2 (360 aa).

The Extracellular portion of the chain corresponds to 1-24; it reads MSVCYRPPGNETLLSWKGSRATGT. N10 carries an N-linked (GlcNAc...) asparagine glycan. A helical transmembrane segment spans residues 25–45; sequence AFLLLAALLGLPGNGFVVWSL. Over 46 to 60 the chain is Cytoplasmic; it reads AGWRPTAGRPLAATL. Residues 61 to 81 form a helical membrane-spanning segment; it reads VLHLALADGAVLLLTPLFVAF. The Extracellular portion of the chain corresponds to 82–96; sequence LSQEAWPLGQVGCKA. A helical membrane pass occupies residues 97 to 117; that stretch reads VYYVCALSMYASVLLTGLLSL. Over 118 to 140 the chain is Cytoplasmic; sequence QRCLAVTRPFLAPRLRSPALARR. Residues 141–161 traverse the membrane as a helical segment; it reads LLLGVWLAALVLAVPAAVYRH. Topologically, residues 162–185 are extracellular; the sequence is LWGGRVCQLCHPSPVHAAAHLSLE. The chain crosses the membrane as a helical span at residues 186-206; it reads TLTAFVLPFGTVLGCYGVTLA. Topologically, residues 207–224 are cytoplasmic; it reads RLRGARWGSGRQGTRVGR. The helical transmembrane segment at 225-245 threads the bilayer; it reads LVSAIVLAFGLLWAPYHAVNL. Topologically, residues 246 to 275 are extracellular; sequence LQAVAALAPPEGPLARLGGAGQAARAGTTA. A helical membrane pass occupies residues 276-296; the sequence is LAFFSSSVNPVLYVFTAGDLL. The Cytoplasmic portion of the chain corresponds to 297 to 360; the sequence is PRAGPRFLTR…GKTEKDSQEW (64 aa). A disordered region spans residues 311 to 360; sequence SGEARGGSRSREGTMELRTTPKLKVMGQGRGNGDPGGGDGGKTEKDSQEW. Positions 338–350 are enriched in gly residues; it reads QGRGNGDPGGGDG. The span at 351–360 shows a compositional bias: basic and acidic residues; sequence GKTEKDSQEW.

The protein belongs to the G-protein coupled receptor 1 family.

The protein localises to the cell membrane. Its function is as follows. Low-affinity receptor for leukotrienes including leukotriene B4. Mediates chemotaxis of granulocytes and macrophages. The response is mediated via G-proteins that activate a phosphatidylinositol-calcium second messenger system. The chain is Leukotriene B4 receptor 2 (Ltb4r2) from Mus musculus (Mouse).